Consider the following 926-residue polypeptide: MHVKAETVLALLTPAPPSVVGQHVVDLSGDGWTLSSTALNRTVPGHLPSQVHLDLFEAGVIDIMASMILTFVGLRMPIGRIPATRLKAYFESTWLVFDGLDTFATITFCDQHVGSTDNQFRQHHFDVSQILKECKQDPVLRINFGSAPNIANTIAKSPDAEEWPPGVQITNEYPNRWYIRKEQSDFGWDWGPAFAPVGPWKPSYIVQNGHAELYVLNTDIDIYRQGQINYLPPDQSQPWIVNASIDFLGPVPCKPSMSIEIKDAATGSVLSSGLLQNVTVSGKSITGTTTIDGDAPKLWWPSGMGKQNLYNVTITVQNDMKKSLAKVTKRTGFRTIFLNQRNITDDQLAQGIAPGANWHFEINGYEFYTKGSNIIPPDAFWPRVTQARMARLFDAVTAGNQNMLRVWASGAYLHDFIYDLADEKGILLWSEFQFSDALYPVNDAFLENVAAEVVYNVRRVNHHPSLALWAGGNEIESLMLPMARRADPTGYSKYIGEYEKLYISLILPLVYENTRSITYSPSSTTEGYLYVNLSAPVPMAERYSNTTPGSYYGDTDYYNYDTSVSFDYNHYPVGRFANEFGFHSMPSLQTWQQAVDPEDLQFNSSVVVLRNHHYTAGGLFTDNFKNSSKGMGEMTMGVEAYYPIPSKSDSVANFSAWCHATQLFQADLYKSQIQFYRRGSGMPERQLGSLYWQLEDIWQAPTWAGIEYDGRWKVLHYVARDIYQPIIVSPFWNYTTGRLEVYVTSDLWEPAQGTVNLTWVDLSGKSIANNAGTPETVSFTVGALNTTNIYTTNISELSLPDLKDSILILSLSGEGRLPNASSKKAFVHQNHFTPVFPKDLSLKDPKLEVSYSPESRKFTVQATGGVSLYTWLDYPAGAVGYFEANAFVLLPGVPKEVSFVAQEGNVTDDWLQRVTVQSLWDQKVRD.

An N-terminal signal peptide occupies residues 1–21; the sequence is MHVKAETVLALLTPAPPSVVG. N-linked (GlcNAc...) asparagine glycans are attached at residues Asn40, Asn242, Asn277, Asn311, and Asn342. Glu474 serves as the catalytic Proton donor. 10 N-linked (GlcNAc...) asparagine glycosylation sites follow: Asn532, Asn603, Asn626, Asn653, Asn733, Asn756, Asn785, Asn793, Asn819, and Asn905.

Belongs to the glycosyl hydrolase 2 family. Beta-mannosidase A subfamily. Homodimer.

The protein resides in the secreted. It catalyses the reaction Hydrolysis of terminal, non-reducing beta-D-mannose residues in beta-D-mannosides.. The protein operates within glycan metabolism; N-glycan degradation. Its function is as follows. Exoglycosidase that cleaves the single beta-linked mannose residue from the non-reducing end of beta-mannosidic oligosaccharides of various complexity and length. Involved in the degradation of polymeric mannan and galactomannan. In Aspergillus fumigatus (strain ATCC MYA-4609 / CBS 101355 / FGSC A1100 / Af293) (Neosartorya fumigata), this protein is Beta-mannosidase A (mndA).